The following is a 277-amino-acid chain: Thiazole synthase (277 aa).

The active-site Schiff-base intermediate with DXP is lysine 119. 1-deoxy-D-xylulose 5-phosphate-binding positions include glycine 180, 206–207 (AG), and 228–229 (NT).

This sequence belongs to the ThiG family. In terms of assembly, homotetramer. Forms heterodimers with either ThiH or ThiS.

Its subcellular location is the plastid. It localises to the chloroplast. The catalysed reaction is [ThiS sulfur-carrier protein]-C-terminal-Gly-aminoethanethioate + 2-iminoacetate + 1-deoxy-D-xylulose 5-phosphate = [ThiS sulfur-carrier protein]-C-terminal Gly-Gly + 2-[(2R,5Z)-2-carboxy-4-methylthiazol-5(2H)-ylidene]ethyl phosphate + 2 H2O + H(+). The protein operates within cofactor biosynthesis; thiamine diphosphate biosynthesis. Its function is as follows. Catalyzes the rearrangement of 1-deoxy-D-xylulose 5-phosphate (DXP) to produce the thiazole phosphate moiety of thiamine. Sulfur is provided by the thiocarboxylate moiety of the carrier protein ThiS. In vitro, sulfur can be provided by H(2)S. This Pyropia yezoensis (Susabi-nori) protein is Thiazole synthase.